We begin with the raw amino-acid sequence, 558 residues long: Atlastin-1 (558 aa).

The segment at 1–28 is disordered; it reads MAKSRRDRNSWGGFSEKSSDWSSEEEEP. The interval 1-34 is N-terminal hypervariable region (HVR); sequence MAKSRRDRNSWGGFSEKSSDWSSEEEEPVRKAGP. Over 1–449 the chain is Cytoplasmic; the sequence is MAKSRRDRNS…NIFHAARTPA (449 aa). Residues serine 10, serine 22, and serine 23 each carry the phosphoserine modification. In terms of domain architecture, GB1/RHD3-type G spans 64 to 309; that stretch reads DKEVVAVSVA…LIPWLLSPER (246 aa). Arginine 77, lysine 78, glycine 79, lysine 80, serine 81, phenylalanine 82, glutamine 148, arginine 217, aspartate 218, valine 276, and asparagine 279 together coordinate GDP. GTP is bound by residues arginine 77, lysine 78, glycine 79, lysine 80, serine 81, and phenylalanine 82. Residue serine 81 participates in Mg(2+) binding. Positions 217, 218, and 276 each coordinate GTP. The tract at residues 347–438 is 3HB (three-helix bundle) domain; that stretch reads MLQATAEANN…YIQYIKHNDS (92 aa). Lysine 395 bears the N6-acetyllysine mark. Residues 412–439 are a coiled coil; sequence EFSRRYLQQLESEIDELYIQYIKHNDSK. The interval 439–447 is linker; it reads KNIFHAART. The chain crosses the membrane as a helical span at residues 450 to 470; it reads TLFVVIFITYVIAGVTGFIGL. A topological domain (lumenal) is located at residue aspartate 471. Residues 472–492 traverse the membrane as a helical segment; sequence IIASLCNMIMGLTLITLCTWA. The Cytoplasmic segment spans residues 493 to 558; that stretch reads YIRYSGEYRE…PTQQPEKKKI (66 aa). The tract at residues 521–558 is autoinhibitory domain; it reads NEALYKLYSAAATHRHLCHQAFPAPKSEPTQQPEKKKI.

This sequence belongs to the TRAFAC class dynamin-like GTPase superfamily. GB1/RHD3 GTPase family. GB1 subfamily. Monomeric and homodimeric. The homodimer, transiently formed by two molecules on opposing membranes, is the active form mediating ER membrane fusion. Interacts with REEP1, REEP5, RTN3 and RTN4 (via the transmembrane region); these proteins are involved in endoplasmic reticulum tubular network organization. Interacts with ZFYVE27; both proteins are involved in endoplasmic reticulum tubular network organization. Interacts with ARL6IP1; both proteins are involved in endoplasmic reticulum tubular network organization. Interacts with SPAST; the interaction is direct, could recruit SPAST to Golgi membranes. Interacts (via N-terminal region) with MAP4K4 (via CNH regulatory domain). May interact with TMED2. Interacts with CPT1C. Phosphorylated. Phosphorylation, by different kinases, of the N-terminal hypervariable region (HVR) regulates the ATL1-mediated membrane tethering step.

The protein localises to the endoplasmic reticulum membrane. It is found in the golgi apparatus membrane. Its subcellular location is the cell projection. The protein resides in the axon. It carries out the reaction GTP + H2O = GDP + phosphate + H(+). Atlastin-1 (ATL1) is a membrane-anchored GTPase that mediates the GTP-dependent fusion of endoplasmic reticulum (ER) membranes, maintaining the continuous ER network. It facilitates the formation of three-way junctions where ER tubules intersect. Two atlastin-1 on neighboring ER tubules bind GTP and form loose homodimers through the GB1/RHD3-type G domains and 3HB regions. Upon GTP hydrolysis, the 3HB regions tighten, pulling the membranes together to drive their fusion. After fusion, the homodimer disassembles upon release of inorganic phosphate (Pi). Subsequently, GDP dissociates, resetting the monomers to a conformation ready for a new fusion cycle. May also regulate more or less directly Golgi biogenesis. Indirectly regulates axonal development. The polypeptide is Atlastin-1 (Mus musculus (Mouse)).